The chain runs to 73 residues: Antimicrobial peptide 6 (73 aa).

A signal peptide spans 1 to 22 (MQIKHLITLFFLVLIVADQCSA). A propeptide spanning residues 45–73 (EISTQIDQYRNLQKREAELEELLDRLPMY) is cleaved from the precursor.

This sequence belongs to the non-disulfide-bridged peptide (NDBP) superfamily. Short antimicrobial peptide (group 4) family. Expressed by the venom gland.

It is found in the secreted. In terms of biological role, antibacterial peptide. The protein is Antimicrobial peptide 6 of Tityus costatus (Brazilian scorpion).